The sequence spans 325 residues: UPF0285 protein MMP0642 (325 aa).

It belongs to the UPF0285 family.

This Methanococcus maripaludis (strain DSM 14266 / JCM 13030 / NBRC 101832 / S2 / LL) protein is UPF0285 protein MMP0642.